The primary structure comprises 925 residues: Protein translocase subunit SecA (925 aa).

ATP is bound by residues Gln-87, 105–109 (GEGKT), and Asp-512. 4 residues coordinate Zn(2+): Cys-910, Cys-912, Cys-921, and His-922.

It belongs to the SecA family. As to quaternary structure, monomer and homodimer. Part of the essential Sec protein translocation apparatus which comprises SecA, SecYEG and auxiliary proteins SecDF-YajC and YidC. Requires Zn(2+) as cofactor.

It is found in the cell inner membrane. Its subcellular location is the cytoplasm. It catalyses the reaction ATP + H2O + cellular proteinSide 1 = ADP + phosphate + cellular proteinSide 2.. Part of the Sec protein translocase complex. Interacts with the SecYEG preprotein conducting channel. Has a central role in coupling the hydrolysis of ATP to the transfer of proteins into and across the cell membrane, serving both as a receptor for the preprotein-SecB complex and as an ATP-driven molecular motor driving the stepwise translocation of polypeptide chains across the membrane. The polypeptide is Protein translocase subunit SecA (Psychrobacter sp. (strain PRwf-1)).